The primary structure comprises 147 residues: Myosin-ID light chain (147 aa).

EF-hand domains are found at residues glutamate 8 to asparagine 43, phenylalanine 79 to arginine 114, and leucine 115 to lysine 147. Positions 21, 23, 25, 27, and 32 each coordinate Ca(2+).

Myosin I is a dimer of a heavy and a light chain. Inability to self-assemble into filaments. Interacts with myoD. Does not interact with myoB or myoC.

The protein localises to the cytoplasm. In terms of biological role, functions as the light chain for myosin-D. Has low affinity for calcium. The protein is Myosin-ID light chain (mlcD) of Dictyostelium discoideum (Social amoeba).